We begin with the raw amino-acid sequence, 779 residues long: Tricorn protease-interacting factor F3 (779 aa).

Substrate contacts are provided by residues Glu102 and 231-235 (GAMEN). His266 serves as a coordination point for Zn(2+). Residue Glu267 is the Proton acceptor of the active site. Positions 270 and 289 each coordinate Zn(2+).

This sequence belongs to the peptidase M1 family. In terms of assembly, part of the tricorn proteolytic complex. Zn(2+) is required as a cofactor.

It is found in the cytoplasm. In terms of biological role, proteases F1, F2 and F3 degrade oligopeptides produced by Tricorn (themselves probably produced by the proteasome), yielding free amino acids. The sequence is that of Tricorn protease-interacting factor F3 (trf3) from Thermoplasma volcanium (strain ATCC 51530 / DSM 4299 / JCM 9571 / NBRC 15438 / GSS1).